We begin with the raw amino-acid sequence, 270 residues long: MAEASNEPYRPLTVDVDRWAAAATPEIAHQLFEIVDIVDANGALRRALTDPSRSGEDRARLVHTLLDGRANEVAVDIVAELASQRSATERQLGDGIERTAVLVAAAAAENRGGGHALEALVDDLIRFKSMLDRSADVQRAFSDSRASAEAKVTLARRLAHTESDEAALLIERAVSAPRGSLPGRLLEQFAQWVADRQQRWIARVETARPLGEEQLARLQDGLNRLYGRDLKLTTETNPSLVGGLRVQVGEEIIDGSLTHRLGQLQQRIGA.

Belongs to the ATPase delta chain family. As to quaternary structure, F-type ATPases have 2 components, F(1) - the catalytic core - and F(0) - the membrane proton channel. F(1) has five subunits: alpha(3), beta(3), gamma(1), delta(1), epsilon(1). F(0) has three main subunits: a(1), b(2) and c(10-14). The alpha and beta chains form an alternating ring which encloses part of the gamma chain. F(1) is attached to F(0) by a central stalk formed by the gamma and epsilon chains, while a peripheral stalk is formed by the delta and b chains.

Its subcellular location is the cell membrane. Its function is as follows. F(1)F(0) ATP synthase produces ATP from ADP in the presence of a proton or sodium gradient. F-type ATPases consist of two structural domains, F(1) containing the extramembraneous catalytic core and F(0) containing the membrane proton channel, linked together by a central stalk and a peripheral stalk. During catalysis, ATP synthesis in the catalytic domain of F(1) is coupled via a rotary mechanism of the central stalk subunits to proton translocation. This protein is part of the stalk that links CF(0) to CF(1). It either transmits conformational changes from CF(0) to CF(1) or is implicated in proton conduction. The protein is ATP synthase subunit delta of Kocuria rhizophila (strain ATCC 9341 / DSM 348 / NBRC 103217 / DC2201).